The chain runs to 143 residues: Large ribosomal subunit protein uL11 (143 aa).

Belongs to the universal ribosomal protein uL11 family. Part of the ribosomal stalk of the 50S ribosomal subunit. Interacts with L10 and the large rRNA to form the base of the stalk. L10 forms an elongated spine to which L12 dimers bind in a sequential fashion forming a multimeric L10(L12)X complex. In terms of processing, one or more lysine residues are methylated.

Forms part of the ribosomal stalk which helps the ribosome interact with GTP-bound translation factors. This is Large ribosomal subunit protein uL11 from Salinispora tropica (strain ATCC BAA-916 / DSM 44818 / JCM 13857 / NBRC 105044 / CNB-440).